Consider the following 431-residue polypeptide: 5-methylthioadenosine/S-adenosylhomocysteine deaminase (431 aa).

Zn(2+) is bound by residues H66 and H68. Positions 95, 147, and 185 each coordinate substrate. H212 lines the Zn(2+) pocket. Positions 215 and 300 each coordinate substrate. D300 is a binding site for Zn(2+).

This sequence belongs to the metallo-dependent hydrolases superfamily. MTA/SAH deaminase family. Zn(2+) is required as a cofactor.

The enzyme catalyses S-adenosyl-L-homocysteine + H2O + H(+) = S-inosyl-L-homocysteine + NH4(+). It carries out the reaction S-methyl-5'-thioadenosine + H2O + H(+) = S-methyl-5'-thioinosine + NH4(+). Its function is as follows. Catalyzes the deamination of 5-methylthioadenosine and S-adenosyl-L-homocysteine into 5-methylthioinosine and S-inosyl-L-homocysteine, respectively. Is also able to deaminate adenosine. The polypeptide is 5-methylthioadenosine/S-adenosylhomocysteine deaminase (Acetivibrio thermocellus (strain ATCC 27405 / DSM 1237 / JCM 9322 / NBRC 103400 / NCIMB 10682 / NRRL B-4536 / VPI 7372) (Clostridium thermocellum)).